Consider the following 417-residue polypeptide: Serine hydroxymethyltransferase (417 aa).

(6S)-5,6,7,8-tetrahydrofolate is bound by residues Leu-121 and 125-127 (GHL). Lys-229 bears the N6-(pyridoxal phosphate)lysine mark. 355 to 357 (SPF) provides a ligand contact to (6S)-5,6,7,8-tetrahydrofolate.

This sequence belongs to the SHMT family. In terms of assembly, homodimer. Pyridoxal 5'-phosphate serves as cofactor.

It is found in the cytoplasm. The catalysed reaction is (6R)-5,10-methylene-5,6,7,8-tetrahydrofolate + glycine + H2O = (6S)-5,6,7,8-tetrahydrofolate + L-serine. It participates in one-carbon metabolism; tetrahydrofolate interconversion. It functions in the pathway amino-acid biosynthesis; glycine biosynthesis; glycine from L-serine: step 1/1. Functionally, catalyzes the reversible interconversion of serine and glycine with tetrahydrofolate (THF) serving as the one-carbon carrier. This reaction serves as the major source of one-carbon groups required for the biosynthesis of purines, thymidylate, methionine, and other important biomolecules. Also exhibits THF-independent aldolase activity toward beta-hydroxyamino acids, producing glycine and aldehydes, via a retro-aldol mechanism. The protein is Serine hydroxymethyltransferase of Salmonella choleraesuis (strain SC-B67).